The primary structure comprises 494 residues: Ketol-acid reductoisomerase (NADP(+)) (494 aa).

In terms of domain architecture, KARI N-terminal Rossmann spans Leu14 to Ser208. Residues Cys45–Gln48, Arg68, Arg76, Ser78, and Asp108–Gln110 contribute to the NADP(+) site. The active site involves His132. Gly158 is an NADP(+) binding site. 2 KARI C-terminal knotted domains span residues Ser209–Glu344 and Ser345–Met487. The Mg(2+) site is built by Asp217, Glu221, Glu389, and Glu393. Substrate is bound at residue Ser414.

The protein belongs to the ketol-acid reductoisomerase family. The cofactor is Mg(2+).

It carries out the reaction (2R)-2,3-dihydroxy-3-methylbutanoate + NADP(+) = (2S)-2-acetolactate + NADPH + H(+). The catalysed reaction is (2R,3R)-2,3-dihydroxy-3-methylpentanoate + NADP(+) = (S)-2-ethyl-2-hydroxy-3-oxobutanoate + NADPH + H(+). Its pathway is amino-acid biosynthesis; L-isoleucine biosynthesis; L-isoleucine from 2-oxobutanoate: step 2/4. The protein operates within amino-acid biosynthesis; L-valine biosynthesis; L-valine from pyruvate: step 2/4. Involved in the biosynthesis of branched-chain amino acids (BCAA). Catalyzes an alkyl-migration followed by a ketol-acid reduction of (S)-2-acetolactate (S2AL) to yield (R)-2,3-dihydroxy-isovalerate. In the isomerase reaction, S2AL is rearranged via a Mg-dependent methyl migration to produce 3-hydroxy-3-methyl-2-ketobutyrate (HMKB). In the reductase reaction, this 2-ketoacid undergoes a metal-dependent reduction by NADPH to yield (R)-2,3-dihydroxy-isovalerate. The polypeptide is Ketol-acid reductoisomerase (NADP(+)) (Aliivibrio fischeri (strain ATCC 700601 / ES114) (Vibrio fischeri)).